We begin with the raw amino-acid sequence, 121 residues long: MTTEHVYSLPKSCRLRKADEFRAVLRHRTVFESLSLRLHIKLKPINDGYARIGLIVAKKIERKAVRRNRIKRLIREAFRKHRQVVQGMDCVMQLRRSVEPSDSARIYQEAVTLLHKAARQL.

This sequence belongs to the RnpA family. As to quaternary structure, consists of a catalytic RNA component (M1 or rnpB) and a protein subunit.

It carries out the reaction Endonucleolytic cleavage of RNA, removing 5'-extranucleotides from tRNA precursor.. RNaseP catalyzes the removal of the 5'-leader sequence from pre-tRNA to produce the mature 5'-terminus. It can also cleave other RNA substrates such as 4.5S RNA. The protein component plays an auxiliary but essential role in vivo by binding to the 5'-leader sequence and broadening the substrate specificity of the ribozyme. The sequence is that of Ribonuclease P protein component from Nitrosomonas eutropha (strain DSM 101675 / C91 / Nm57).